We begin with the raw amino-acid sequence, 62 residues long: Disintegrin atropoimin (62 aa).

The region spanning 1 to 62 (EAGEECDCGT…ADCPRNGLYG (62 aa)) is the Disintegrin domain. 5 disulfides stabilise this stretch: C6-C21, C8-C16, C15-C38, C29-C35, and C34-C48. The Cell attachment site signature appears at 41–42 (GD).

It belongs to the venom metalloproteinase (M12B) family. P-II subfamily. P-IIa sub-subfamily. Monomer. In terms of tissue distribution, expressed by the venom gland.

Its subcellular location is the secreted. Its function is as follows. Inhibits ADP- (IC(50)=63 nM) and collagen-induced (IC(50)=53 nM) aggregation of human platelets. In vitro, inhibits adhesion of endothelial cells to vitronectin, type-I collagen and, to a lower degree, fibronectin and laminin. In Metlapilcoatlus mexicanus (Central American jumping pitviper), this protein is Disintegrin atropoimin.